Here is a 397-residue protein sequence, read N- to C-terminus: Cytochrome b (397 aa).

4 helical membrane passes run 38–58 (FGSLAGICLVIQIVTGVFLAM), 82–104 (WLLRYMHANGASMFFIVVYLHIF), 119–139 (VWCLGVVIFLLMIVTAFIGYV), and 185–205 (FFSLHYLLPFILVGASLLHLA). Heme b is bound by residues histidine 88 and histidine 102. 2 residues coordinate heme b: histidine 189 and histidine 203. Histidine 208 is an a ubiquinone binding site. A run of 4 helical transmembrane segments spans residues 231–251 (FYVKDLVGWVAFAIFFSIWIF), 295–315 (AGGVAAIALVFISLLALPFFK), 327–347 (IYQGIFWLLLADCLLLGWIGC), and 354–373 (FVTIGQISSFFFFLFFAITP).

This sequence belongs to the cytochrome b family. As to quaternary structure, the main subunits of complex b-c1 are: cytochrome b, cytochrome c1 and the Rieske protein. The cofactor is heme b.

The protein localises to the mitochondrion inner membrane. In terms of biological role, component of the ubiquinol-cytochrome c reductase complex (complex III or cytochrome b-c1 complex) that is part of the mitochondrial respiratory chain. The b-c1 complex mediates electron transfer from ubiquinol to cytochrome c. Contributes to the generation of a proton gradient across the mitochondrial membrane that is then used for ATP synthesis. This is Cytochrome b (MT-CYB) from Oryza sativa subsp. japonica (Rice).